The primary structure comprises 396 residues: NADH-quinone oxidoreductase subunit D 1 (396 aa).

It belongs to the complex I 49 kDa subunit family. NDH-1 is composed of 14 different subunits. Subunits NuoB, C, D, E, F, and G constitute the peripheral sector of the complex.

It is found in the cell inner membrane. The enzyme catalyses a quinone + NADH + 5 H(+)(in) = a quinol + NAD(+) + 4 H(+)(out). NDH-1 shuttles electrons from NADH, via FMN and iron-sulfur (Fe-S) centers, to quinones in the respiratory chain. The immediate electron acceptor for the enzyme in this species is believed to be ubiquinone. Couples the redox reaction to proton translocation (for every two electrons transferred, four hydrogen ions are translocated across the cytoplasmic membrane), and thus conserves the redox energy in a proton gradient. The polypeptide is NADH-quinone oxidoreductase subunit D 1 (Nitrobacter hamburgensis (strain DSM 10229 / NCIMB 13809 / X14)).